Here is a 238-residue protein sequence, read N- to C-terminus: Ribosomal RNA small subunit methyltransferase G (238 aa).

S-adenosyl-L-methionine contacts are provided by residues Gly77, Phe82, 128–129 (AE), and Arg147.

It belongs to the methyltransferase superfamily. RNA methyltransferase RsmG family.

Its subcellular location is the cytoplasm. In terms of biological role, specifically methylates the N7 position of guanine in position 535 of 16S rRNA. This is Ribosomal RNA small subunit methyltransferase G from Listeria welshimeri serovar 6b (strain ATCC 35897 / DSM 20650 / CCUG 15529 / CIP 8149 / NCTC 11857 / SLCC 5334 / V8).